We begin with the raw amino-acid sequence, 94 residues long: Aspartyl/glutamyl-tRNA(Asn/Gln) amidotransferase subunit C (94 aa).

It belongs to the GatC family. As to quaternary structure, heterotrimer of A, B and C subunits.

It carries out the reaction L-glutamyl-tRNA(Gln) + L-glutamine + ATP + H2O = L-glutaminyl-tRNA(Gln) + L-glutamate + ADP + phosphate + H(+). It catalyses the reaction L-aspartyl-tRNA(Asn) + L-glutamine + ATP + H2O = L-asparaginyl-tRNA(Asn) + L-glutamate + ADP + phosphate + 2 H(+). Allows the formation of correctly charged Asn-tRNA(Asn) or Gln-tRNA(Gln) through the transamidation of misacylated Asp-tRNA(Asn) or Glu-tRNA(Gln) in organisms which lack either or both of asparaginyl-tRNA or glutaminyl-tRNA synthetases. The reaction takes place in the presence of glutamine and ATP through an activated phospho-Asp-tRNA(Asn) or phospho-Glu-tRNA(Gln). The chain is Aspartyl/glutamyl-tRNA(Asn/Gln) amidotransferase subunit C from Solidesulfovibrio magneticus (strain ATCC 700980 / DSM 13731 / RS-1) (Desulfovibrio magneticus).